A 427-amino-acid chain; its full sequence is Arginine biosynthesis bifunctional protein ArgJ (427 aa).

Residues Thr174, Lys200, Thr211, Glu291, Asn422, and Thr427 each contribute to the substrate site. The active-site Nucleophile is the Thr211.

The protein belongs to the ArgJ family. Heterotetramer of two alpha and two beta chains.

Its subcellular location is the cytoplasm. The enzyme catalyses N(2)-acetyl-L-ornithine + L-glutamate = N-acetyl-L-glutamate + L-ornithine. The catalysed reaction is L-glutamate + acetyl-CoA = N-acetyl-L-glutamate + CoA + H(+). Its pathway is amino-acid biosynthesis; L-arginine biosynthesis; L-ornithine and N-acetyl-L-glutamate from L-glutamate and N(2)-acetyl-L-ornithine (cyclic): step 1/1. The protein operates within amino-acid biosynthesis; L-arginine biosynthesis; N(2)-acetyl-L-ornithine from L-glutamate: step 1/4. In terms of biological role, catalyzes two activities which are involved in the cyclic version of arginine biosynthesis: the synthesis of N-acetylglutamate from glutamate and acetyl-CoA as the acetyl donor, and of ornithine by transacetylation between N(2)-acetylornithine and glutamate. The chain is Arginine biosynthesis bifunctional protein ArgJ from Prochlorococcus marinus (strain MIT 9313).